Consider the following 649-residue polypeptide: DNA mismatch repair protein MutL (649 aa).

It belongs to the DNA mismatch repair MutL/HexB family.

Its function is as follows. This protein is involved in the repair of mismatches in DNA. It is required for dam-dependent methyl-directed DNA mismatch repair. May act as a 'molecular matchmaker', a protein that promotes the formation of a stable complex between two or more DNA-binding proteins in an ATP-dependent manner without itself being part of a final effector complex. In Streptococcus pneumoniae serotype 19F (strain G54), this protein is DNA mismatch repair protein MutL.